The sequence spans 103 residues: Small ribosomal subunit protein uS10 (103 aa).

It belongs to the universal ribosomal protein uS10 family. In terms of assembly, part of the 30S ribosomal subunit.

In terms of biological role, involved in the binding of tRNA to the ribosomes. This is Small ribosomal subunit protein uS10 from Chlorobium chlorochromatii (strain CaD3).